The primary structure comprises 296 residues: Glycine--tRNA ligase alpha subunit (296 aa).

It belongs to the class-II aminoacyl-tRNA synthetase family. In terms of assembly, tetramer of two alpha and two beta subunits.

The protein localises to the cytoplasm. It carries out the reaction tRNA(Gly) + glycine + ATP = glycyl-tRNA(Gly) + AMP + diphosphate. The sequence is that of Glycine--tRNA ligase alpha subunit from Parasynechococcus marenigrum (strain WH8102).